We begin with the raw amino-acid sequence, 237 residues long: BTB/POZ domain-containing protein KCTD6 (237 aa).

Positions 1–104 are interaction with ANK1 isoform Mu7; that stretch reads MDNGDWGYMM…FYQIEPLIQC (104 aa). The interval 10–110 is interaction with CUL3; the sequence is MSDPVTLNVG…LIQCLNDPRP (101 aa). Residues 12 to 81 form the BTB domain; it reads DPVTLNVGGH…LRTSELTLPL (70 aa). The interaction with USP21 stretch occupies residues 113–187; sequence PMDTFEEVVE…TFGPCDYHQE (75 aa).

In terms of assembly, homopentamer. Interacts with KCTD11; KCTD6 and KCTD11 may associate in heteropentameric assemblies. Interacts (via BTB domain) with CUL3; initially a 4:4 stoichiometry has been reported, however, electron microscopy revealed pentameric states with a five-pointed pinwheel shape. The interaction with CUL3 is indicative for a participation in a BCR (BTB-CUL3-RBX1) E3 ubiquitin-protein ligase complex. Interacts with HDAC1; probably indirect as the interaction requires the presence of KCTD11. Interacts with USP21 (preferentially catalytic inactive form). Interacts with ANK1 isoform Mu7; detected in striated muscle. Interacts with USP11. In terms of tissue distribution, highly expressed in cerebellum and brain.

Its subcellular location is the cytoplasm. The protein localises to the myofibril. It localises to the sarcomere. The protein resides in the m line. It participates in protein modification; protein ubiquitination. In terms of biological role, probable substrate-specific adapter of a BCR (BTB-CUL3-RBX1) E3 ubiquitin-protein ligase complex mediating the ubiquitination and subsequent proteasomal degradation of target proteins. Promotes the ubiquitination of HDAC1; the function seems to depend on KCTD11:KCTD6 oligomerization. Can function as antagonist of the Hedgehog pathway by affecting the nuclear transfer of transcription factor GLI1; the function probably occurs via HDAC1 down-regulation, keeping GLI1 acetylated and inactive. Inhibits cell growth and tumorigenicity of medulloblastoma (MDB). Involved in regulating protein levels of ANK1 isoform Mu7 probably implicating CUL3-dependent proteasomal degradation. The polypeptide is BTB/POZ domain-containing protein KCTD6 (Kctd6) (Mus musculus (Mouse)).